We begin with the raw amino-acid sequence, 1128 residues long: Testis-expressed protein 2 (1128 aa).

Disordered stretches follow at residues 1-28, 71-99, and 130-279; these read MTSL…VQRS, AKED…GLSV, and PLAL…FFKV. A compositionally biased stretch (low complexity) spans 130 to 186; that stretch reads PLALSPGSSSSGPLASSPSVSSLSEQKTSSSSPLSSPSKSPVLSSSASSSALSSAKP. S195 bears the Phosphoserine mark. Positions 248 to 274 are enriched in polar residues; it reads QFTQPRNTGGDSKTAPSSPLTSPSDTR. At T261 the chain carries Phosphothreonine. Phosphoserine occurs at positions 264, 265, 269, and 294. Residues 345–387 are disordered; the sequence is KEEEGDSEGEGYGSDSNTSRSDHLKPTEDASKEVEPKGSQASS. Basic and acidic residues predominate over residues 364–380; sequence RSDHLKPTEDASKEVEP. 2 helical membrane-spanning segments follow: residues 473–493 and 495–515; these read TLGF…PYYM and GLFL…WFFT. An N-linked (GlcNAc...) asparagine glycan is attached at N593. The segment covering 645–671 has biased composition (basic and acidic residues); sequence SKAQSDKEATEEKPPPEKELPSEDLKK. Disordered regions lie at residues 645–688, 716–765, 787–821, and 945–981; these read SKAQ…DPIL, RKPA…QKEL, QDNR…EEEQ, and ADSD…GYVG. S733, S739, S745, S749, S752, S799, and S816 each carry phosphoserine. Positions 736 to 751 are enriched in low complexity; the sequence is SSPSGHLSHSRSSSKG. Residues 796-806 show a composition bias toward polar residues; sequence PVQSAESSPTA. In terms of domain architecture, SMP-LTD spans 817 to 1102; it reads EEEEQEAWVN…MPNMDDVYIP (286 aa). The segment covering 946 to 963 has biased composition (acidic residues); it reads DSDEESSSAGSSEEDDPP.

The protein resides in the endoplasmic reticulum membrane. Its subcellular location is the nucleus membrane. During endoplasmic reticulum (ER) stress or when cellular ceramide levels increase, may induce contacts between the ER and medial-Golgi complex to facilitate non-vesicular transport of ceramides from the ER to the Golgi complex where they are converted to complex sphingolipids, preventing toxic ceramide accumulation. The sequence is that of Testis-expressed protein 2 (Tex2) from Mus musculus (Mouse).